Here is a 191-residue protein sequence, read N- to C-terminus: Orotate phosphoribosyltransferase (191 aa).

116-124 (EDVVTTGGS) is a binding site for 5-phospho-alpha-D-ribose 1-diphosphate. Orotate is bound by residues T120 and R148.

It belongs to the purine/pyrimidine phosphoribosyltransferase family. PyrE subfamily. In terms of assembly, homodimer. Requires Mg(2+) as cofactor.

The enzyme catalyses orotidine 5'-phosphate + diphosphate = orotate + 5-phospho-alpha-D-ribose 1-diphosphate. Its pathway is pyrimidine metabolism; UMP biosynthesis via de novo pathway; UMP from orotate: step 1/2. In terms of biological role, catalyzes the transfer of a ribosyl phosphate group from 5-phosphoribose 1-diphosphate to orotate, leading to the formation of orotidine monophosphate (OMP). The sequence is that of Orotate phosphoribosyltransferase from Carboxydothermus hydrogenoformans (strain ATCC BAA-161 / DSM 6008 / Z-2901).